A 316-amino-acid polypeptide reads, in one-letter code: CD276 antigen (316 aa).

Positions Met1–Ala28 are cleaved as a signal peptide. The Ig-like V-type domain maps to Val29–Ala139. The Extracellular portion of the chain corresponds to Val29 to Ala248. Asn104, Asn189, and Asn215 each carry an N-linked (GlcNAc...) asparagine glycan. Residues Pro145–Thr238 enclose the Ig-like C2-type domain. Cys165 and Cys220 are disulfide-bonded. A helical transmembrane segment spans residues Leu249–Val269. The Cytoplasmic portion of the chain corresponds to Cys270–Ala316. Positions Glu281–Gly292 are enriched in acidic residues. The disordered stretch occupies residues Glu281–Ala316.

This sequence belongs to the immunoglobulin superfamily. BTN/MOG family. In terms of assembly, interacts with TREML2 and this interaction enhances T-cell activation.

The protein localises to the membrane. In terms of biological role, modulates T-cell-mediated immune responses and the development of acute and chronic transplant rejection. May play a positive regulatory role in bone formation and has a dual role in the bone-immune interface. Induces antitumor immunity as it activates both acquired and innate immunity leading to natural killer cell and CD8 T-cell dependent killing of tumor cells. In Rattus norvegicus (Rat), this protein is CD276 antigen (Cd276).